Reading from the N-terminus, the 740-residue chain is Polyribonucleotide nucleotidyltransferase (740 aa).

Mg(2+) contacts are provided by Asp-514 and Asp-520. The KH domain occupies 580–639 (PRIITVKIPVDKIGEVIGPKRQMINQIQEDTGAEITIEDDGTIYIGAADGPAAEAARATI). Residues 651 to 723 (GERILGSVVK…SRGKLSLIPV (73 aa)) form the S1 motif domain.

This sequence belongs to the polyribonucleotide nucleotidyltransferase family. As to quaternary structure, homotrimer. Mg(2+) is required as a cofactor.

Its subcellular location is the cytoplasm. The catalysed reaction is RNA(n+1) + phosphate = RNA(n) + a ribonucleoside 5'-diphosphate. Its function is as follows. Involved in mRNA degradation. Catalyzes the phosphorolysis of single-stranded polyribonucleotides processively in the 3'- to 5'-direction. In Streptomyces antibioticus, this protein is Polyribonucleotide nucleotidyltransferase.